Here is a 341-residue protein sequence, read N- to C-terminus: MLRRSASREGAHVLIDTYGRVATDLRVSLTDRCNLRCTYCMPEEGLQWLAKPDLLTDDEIVRLIDIAVTSLGIEEVRFTGGEPLLRPGLVGIVERVAALEPRPQMSLTTNGIGLRRTATALKAAGLDRVNVSLDTLRPDVFKTLTRRDRHKDVLEGLAAAREAGLTPVKVNSVLMPGLNDDEAPDLLAWAVEHDYELRFIEQMPLDAQHGWKREGMVTAGDILTSLRTRFELTAEGSEERGSAPAERWLVDGGPHRVGVIASVTRPFCSACDRTRLTADGQVRTCLFATEETDLRAALRSDAPDEEIARIWRLAMWGKKAGAGLDDPTFVQPDRPMSAIGG.

Residues 17–235 form the Radical SAM core domain; sequence TYGRVATDLR…LRTRFELTAE (219 aa). Position 26 (R26) interacts with GTP. The [4Fe-4S] cluster site is built by C33 and C37. Y39 contributes to the S-adenosyl-L-methionine binding site. C40 is a [4Fe-4S] cluster binding site. R77 provides a ligand contact to GTP. An S-adenosyl-L-methionine-binding site is contributed by G81. A GTP-binding site is contributed by T108. Residue S132 coordinates S-adenosyl-L-methionine. K169 is a binding site for GTP. Residue M203 participates in S-adenosyl-L-methionine binding. Residues C268 and C271 each contribute to the [4Fe-4S] cluster site. GTP is bound at residue 273 to 275; it reads RTR. Residue C285 participates in [4Fe-4S] cluster binding.

Belongs to the radical SAM superfamily. MoaA family. Monomer and homodimer. The cofactor is [4Fe-4S] cluster.

It catalyses the reaction GTP + AH2 + S-adenosyl-L-methionine = (8S)-3',8-cyclo-7,8-dihydroguanosine 5'-triphosphate + 5'-deoxyadenosine + L-methionine + A + H(+). It participates in cofactor biosynthesis; molybdopterin biosynthesis. Functionally, catalyzes the cyclization of GTP to (8S)-3',8-cyclo-7,8-dihydroguanosine 5'-triphosphate. This Streptomyces coelicolor (strain ATCC BAA-471 / A3(2) / M145) protein is GTP 3',8-cyclase.